A 140-amino-acid polypeptide reads, in one-letter code: MAAITFHLDVVSAEKKIFSGRVETFQVTGSEGELGIFHGHTPLLTAIKPGMVRIVKQHGHEEIIYVSGGMVEIQPGTATVLADTAIRGEELDAAKAEEAKRRAEEQIQNQHGDMDFAQAASELAKAIAQLRVIELTKKRR.

It belongs to the ATPase epsilon chain family. As to quaternary structure, F-type ATPases have 2 components, CF(1) - the catalytic core - and CF(0) - the membrane proton channel. CF(1) has five subunits: alpha(3), beta(3), gamma(1), delta(1), epsilon(1). CF(0) has three main subunits: a, b and c.

It is found in the cell inner membrane. In terms of biological role, produces ATP from ADP in the presence of a proton gradient across the membrane. In Vibrio alginolyticus, this protein is ATP synthase epsilon chain (atpC).